A 354-amino-acid chain; its full sequence is Vanillate O-demethylase oxygenase subunit (354 aa).

One can recognise a Rieske domain in the interval 7-107; that stretch reads WYVACTPDEI…VEERYGFIWV (101 aa). Residues C47, H49, C66, and H69 each contribute to the [2Fe-2S] cluster site.

This sequence belongs to the bacterial ring-hydroxylating dioxygenase alpha subunit family. As to quaternary structure, this demethylase system consists of two proteins: an oxygenase and an oxygenase reductase. Requires [2Fe-2S] cluster as cofactor. Fe cation serves as cofactor.

It carries out the reaction vanillate + NADH + O2 + H(+) = 3,4-dihydroxybenzoate + formaldehyde + NAD(+) + H2O. Its pathway is xenobiotic degradation; vanillyl-alcohol degradation. In Pseudomonas sp. (strain HR199 / DSM 7063), this protein is Vanillate O-demethylase oxygenase subunit (vanA).